The sequence spans 208 residues: Cysteine-rich protein 2 (208 aa).

Residues 5–57 form the LIM zinc-binding 1 domain; it reads CPKCDKTVYFAEKVSSLGKDWHKFCLKCERCSKTLTPGGHAEHDGKPFCHKPC. Lys23 carries the N6-acetyllysine modification. The segment at 98–119 is disordered; that stretch reads AEERKASGPPKGPSRASSVTTF. Phosphoserine is present on Ser104. An LIM zinc-binding 2 domain is found at 126-178; it reads CPRCSKKVYFAEKVTSLGKDWHRPCLRCERCGKTLTPGGHAEHDGQPYCHKPC. Residues Lys138 and Lys144 each carry the N6-acetyllysine modification.

In terms of assembly, interacts with TGFB1I1. Widespread tissue expression; highest levels in the heart.

The protein is Cysteine-rich protein 2 (CRIP2) of Homo sapiens (Human).